We begin with the raw amino-acid sequence, 315 residues long: Acetyl-coenzyme A carboxylase carboxyl transferase subunit alpha (315 aa).

One can recognise a CoA carboxyltransferase C-terminal domain in the interval 36–289 (LSKKRLELME…RKAVAAELKI (254 aa)).

This sequence belongs to the AccA family. In terms of assembly, acetyl-CoA carboxylase is a heterohexamer composed of biotin carboxyl carrier protein (AccB), biotin carboxylase (AccC) and two subunits each of ACCase subunit alpha (AccA) and ACCase subunit beta (AccD).

The protein resides in the cytoplasm. It catalyses the reaction N(6)-carboxybiotinyl-L-lysyl-[protein] + acetyl-CoA = N(6)-biotinyl-L-lysyl-[protein] + malonyl-CoA. The protein operates within lipid metabolism; malonyl-CoA biosynthesis; malonyl-CoA from acetyl-CoA: step 1/1. Its function is as follows. Component of the acetyl coenzyme A carboxylase (ACC) complex. First, biotin carboxylase catalyzes the carboxylation of biotin on its carrier protein (BCCP) and then the CO(2) group is transferred by the carboxyltransferase to acetyl-CoA to form malonyl-CoA. This Francisella tularensis subsp. tularensis (strain FSC 198) protein is Acetyl-coenzyme A carboxylase carboxyl transferase subunit alpha.